Consider the following 290-residue polypeptide: Probable septum site-determining protein MinC (290 aa).

It belongs to the MinC family. Interacts with MinD and FtsZ.

Cell division inhibitor that blocks the formation of polar Z ring septums. Rapidly oscillates between the poles of the cell to destabilize FtsZ filaments that have formed before they mature into polar Z rings. Prevents FtsZ polymerization. In Heliobacterium modesticaldum (strain ATCC 51547 / Ice1), this protein is Probable septum site-determining protein MinC.